Here is a 214-residue protein sequence, read N- to C-terminus: Transcription factor 23 (214 aa).

Disordered regions lie at residues 1-86 and 174-214; these read MSQR…ARER and DSTT…LGDK. The segment covering 40–49 has biased composition (basic and acidic residues); it reads TRQDPWEERS. In terms of domain architecture, bHLH spans 76 to 128; sequence EASPENAARERSRVRTLRQAFLALQAALPAVPPDTKLSKLDVLVLAASYIAHL. Positions 174–183 are enriched in polar residues; that stretch reads DSTTASTPSQ.

Forms inactive heterodimeric complexes with TCF3. In terms of tissue distribution, expressed in liver, kidney and spleen.

Its subcellular location is the nucleus. Inhibits E-box-mediated binding and transactivation of bHLH factors. Inhibitory effect is similar to that of ID proteins. Inhibits the formation of TCF3 and MYOD1 homodimers and heterodimers. Lacks DNA binding activity. Seems to play a role in the inhibition of myogenesis. The protein is Transcription factor 23 (TCF23) of Homo sapiens (Human).